A 464-amino-acid chain; its full sequence is ATP synthase subunit beta (464 aa).

Residue 152 to 159 (GGAGVGKT) coordinates ATP.

This sequence belongs to the ATPase alpha/beta chains family. F-type ATPases have 2 components, CF(1) - the catalytic core - and CF(0) - the membrane proton channel. CF(1) has five subunits: alpha(3), beta(3), gamma(1), delta(1), epsilon(1). CF(0) has three main subunits: a(1), b(2) and c(9-12). The alpha and beta chains form an alternating ring which encloses part of the gamma chain. CF(1) is attached to CF(0) by a central stalk formed by the gamma and epsilon chains, while a peripheral stalk is formed by the delta and b chains.

The protein resides in the cell inner membrane. The enzyme catalyses ATP + H2O + 4 H(+)(in) = ADP + phosphate + 5 H(+)(out). Functionally, produces ATP from ADP in the presence of a proton gradient across the membrane. The catalytic sites are hosted primarily by the beta subunits. The polypeptide is ATP synthase subunit beta (Aliarcobacter butzleri (strain RM4018) (Arcobacter butzleri)).